Here is a 530-residue protein sequence, read N- to C-terminus: Synembryn-like chaperone C3E7.04c (530 aa).

The chain crosses the membrane as a helical span at residues 492-512 (SFIYHCYHSFVGPIHILLLMF).

It belongs to the synembryn family.

The protein localises to the membrane. Functionally, chaperone that specifically binds and folds some, but not all, nascent G alpha proteins prior to G protein heterotrimer formation, promoting their stability and activity. Also acts as a guanine nucleotide exchange factor (GEF) for G alpha proteins by stimulating exchange of bound GDP for free GTP. This is Synembryn-like chaperone C3E7.04c from Schizosaccharomyces pombe (strain 972 / ATCC 24843) (Fission yeast).